We begin with the raw amino-acid sequence, 351 residues long: Holliday junction branch migration complex subunit RuvB (351 aa).

A disordered region spans residues Met1 to Thr22. A large ATPase domain (RuvB-L) region spans residues Ser2–Tyr185. ATP is bound by residues Leu24, Arg25, Gly66, Lys69, Thr70, Thr71, Glu132–Phe134, Arg175, Tyr185, and Arg222. Mg(2+) is bound at residue Thr70. The small ATPAse domain (RuvB-S) stretch occupies residues Thr186–Glu256. The tract at residues Ala259–Asp351 is head domain (RuvB-H). The DNA site is built by Arg295, Arg314, and Arg319.

It belongs to the RuvB family. In terms of assembly, homohexamer. Forms an RuvA(8)-RuvB(12)-Holliday junction (HJ) complex. HJ DNA is sandwiched between 2 RuvA tetramers; dsDNA enters through RuvA and exits via RuvB. An RuvB hexamer assembles on each DNA strand where it exits the tetramer. Each RuvB hexamer is contacted by two RuvA subunits (via domain III) on 2 adjacent RuvB subunits; this complex drives branch migration. In the full resolvosome a probable DNA-RuvA(4)-RuvB(12)-RuvC(2) complex forms which resolves the HJ.

The protein localises to the cytoplasm. The catalysed reaction is ATP + H2O = ADP + phosphate + H(+). The RuvA-RuvB-RuvC complex processes Holliday junction (HJ) DNA during genetic recombination and DNA repair, while the RuvA-RuvB complex plays an important role in the rescue of blocked DNA replication forks via replication fork reversal (RFR). RuvA specifically binds to HJ cruciform DNA, conferring on it an open structure. The RuvB hexamer acts as an ATP-dependent pump, pulling dsDNA into and through the RuvAB complex. RuvB forms 2 homohexamers on either side of HJ DNA bound by 1 or 2 RuvA tetramers; 4 subunits per hexamer contact DNA at a time. Coordinated motions by a converter formed by DNA-disengaged RuvB subunits stimulates ATP hydrolysis and nucleotide exchange. Immobilization of the converter enables RuvB to convert the ATP-contained energy into a lever motion, pulling 2 nucleotides of DNA out of the RuvA tetramer per ATP hydrolyzed, thus driving DNA branch migration. The RuvB motors rotate together with the DNA substrate, which together with the progressing nucleotide cycle form the mechanistic basis for DNA recombination by continuous HJ branch migration. Branch migration allows RuvC to scan DNA until it finds its consensus sequence, where it cleaves and resolves cruciform DNA. The protein is Holliday junction branch migration complex subunit RuvB of Bradyrhizobium diazoefficiens (strain JCM 10833 / BCRC 13528 / IAM 13628 / NBRC 14792 / USDA 110).